A 257-amino-acid polypeptide reads, in one-letter code: Large ribosomal subunit protein uL2 (257 aa).

The interval 207 to 230 (VEHPFGGGNHQHIGKPSTIRRDAP) is disordered.

It belongs to the universal ribosomal protein uL2 family. In terms of assembly, component of the large ribosomal subunit.

It is found in the cytoplasm. Its function is as follows. Component of the large ribosomal subunit. The ribosome is a large ribonucleoprotein complex responsible for the synthesis of proteins in the cell. The protein is Large ribosomal subunit protein uL2 (rpl8) of Danio rerio (Zebrafish).